The following is a 338-amino-acid chain: Homeobox protein ceh-20 (338 aa).

The PBC domain maps to 4–187 (THPANLSELL…VMILRSRFLD (184 aa)). Positions 11–91 (ELLDAVLKIN…EGVAGPDKGG (81 aa)) are PBC-A. Positions 94 to 187 (GSDASGGDQA…VMILRSRFLD (94 aa)) are PBC-B. The segment at residues 188-250 (ARRKRRNFSK…NKRIRYKKNM (63 aa)) is a DNA-binding region (homeobox; TALE-type).

Belongs to the TALE/PBX homeobox family. Interacts with Meis protein psa-3. Interacts with homeobox protein nob-1. In terms of tissue distribution, expressed in head dopaminergic neurons.

The protein resides in the nucleus. Transcription factor that binds to the 5'-TGATNNAT(G/T)(G/A)-3' PBC/Hox lineage enhancer region of sem-2 to promote cell fate specification in the postembryonic mesoderm (also known as the M lineage). Required for the M lineage-specific expression of the transcription factor, mls-2. Required for asymmetric division of the T hypodermal cell, probably acting via the regulation of asymmetric expression of Meis protein psa-3 in concert with homeobox protein nob-1 and the Wnt-MAPK pathway. Has a role in the mig-13 pathway to promote the guidance, migration and positioning of Q neuroblasts and their descendants along the anteroposterior body axis and the anterior migration of BDU interneurons. Also required for normal vulval formation. Plays a role in regulating gene expression in dopaminergic neurons, acting in midbody PDE neurons, and acting redundantly with ceh-40 in head neurons. May activate dopamine pathway genes in concert with ETS domain-containing protein ast-1, and homeobox proteins ceh-43 and ceh-40. The sequence is that of Homeobox protein ceh-20 from Caenorhabditis elegans.